An 89-amino-acid chain; its full sequence is MATKTYYFYVLLCADGSFYGGFTDDVKARVATHNAGKGAKYTAQRLPVRLLYHQAFADKHDALSAEWHFKHQTRHRKEVFLEDHQVEWR.

In terms of domain architecture, GIY-YIG spans 4 to 79 (KTYYFYVLLC…KHQTRHRKEV (76 aa)).

Belongs to the UPF0213 family.

In Lacticaseibacillus paracasei (strain ATCC 334 / BCRC 17002 / CCUG 31169 / CIP 107868 / KCTC 3260 / NRRL B-441) (Lactobacillus paracasei), this protein is UPF0213 protein LSEI_1587.